Reading from the N-terminus, the 353-residue chain is Uroporphyrinogen decarboxylase (353 aa).

Residues 30–34, aspartate 79, tyrosine 154, serine 209, and histidine 332 contribute to the substrate site; that span reads RQAGR.

This sequence belongs to the uroporphyrinogen decarboxylase family. As to quaternary structure, homodimer.

It is found in the cytoplasm. It carries out the reaction uroporphyrinogen III + 4 H(+) = coproporphyrinogen III + 4 CO2. It functions in the pathway porphyrin-containing compound metabolism; protoporphyrin-IX biosynthesis; coproporphyrinogen-III from 5-aminolevulinate: step 4/4. Functionally, catalyzes the decarboxylation of four acetate groups of uroporphyrinogen-III to yield coproporphyrinogen-III. The sequence is that of Uroporphyrinogen decarboxylase from Mycolicibacterium smegmatis (strain ATCC 700084 / mc(2)155) (Mycobacterium smegmatis).